A 420-amino-acid chain; its full sequence is MKQQIFRLLADLRFSIFLLLLISFCSIVGTVIEQDQSIEIYKTNYPLTNPVFGVLTWDRILLFGLDHVYRTWWFFALIFLFGLSLILCTFLQQLPSLKIARRCQFFRTTNQFYRLKISTVLNDFSFNKILGRITGSQYSIFQQKNIVYCYKGLIGRIAPILVHLSMILILVGTIVGSLFGFKAQEIVPKTENFHIQNILANGQLTVIPKTSARINDFWITYTKTKTVSQFYSDISILNKQGNEIERKTISVNHPLIHNGVYYYQTDWNLVGLRFKTMANEIIEYPLINFSENQKIWLTWISTNKSLTEGVVTIIDNLEGYCSIYNETGQFLGNIELNEIINLKQPLTLIEIISSTGLQIKTDPGIQIIYSGFFFLMLSTLISYITYSQIWIIQKEKKLFIGGTTNRAVFDFELEFFKIIK.

Transmembrane regions (helical) follow at residues 12–32 (LRFS…GTVI), 71–91 (TWWF…CTFL), and 157–177 (IAPI…IVGS).

Belongs to the Ccs1/CcsB family. As to quaternary structure, may interact with CcsA.

It localises to the plastid. The protein resides in the chloroplast thylakoid membrane. Required during biogenesis of c-type cytochromes (cytochrome c6 and cytochrome f) at the step of heme attachment. This Phaeodactylum tricornutum (strain CCAP 1055/1) protein is Cytochrome c biogenesis protein Ccs1.